The sequence spans 189 residues: Stathmin-4 (189 aa).

2 S-palmitoyl cysteine lipidation sites follow: Cys20 and Cys22. The region spanning 48 to 189 is the SLD domain; that stretch reads SDMEVIELNK…NKELKEEASR (142 aa). At Ser90 the chain carries Phosphoserine. Residues 90 to 188 adopt a coiled-coil conformation; the sequence is SLEEIQKKLE…KNKELKEEAS (99 aa). The interval 168 to 189 is disordered; it reads QEKDKHAEEVRKNKELKEEASR.

Belongs to the stathmin family.

It localises to the golgi apparatus. It is found in the cell projection. The protein localises to the growth cone. Its subcellular location is the axon. In terms of biological role, exhibits microtubule-destabilizing activity. In Homo sapiens (Human), this protein is Stathmin-4 (STMN4).